We begin with the raw amino-acid sequence, 177 residues long: ATP-dependent protease subunit HslV (177 aa).

Residue threonine 7 is part of the active site. Residues alanine 162, cysteine 165, and threonine 168 each coordinate Na(+).

Belongs to the peptidase T1B family. HslV subfamily. In terms of assembly, a double ring-shaped homohexamer of HslV is capped on each side by a ring-shaped HslU homohexamer. The assembly of the HslU/HslV complex is dependent on binding of ATP.

The protein localises to the cytoplasm. It carries out the reaction ATP-dependent cleavage of peptide bonds with broad specificity.. Its activity is regulated as follows. Allosterically activated by HslU binding. Its function is as follows. Protease subunit of a proteasome-like degradation complex believed to be a general protein degrading machinery. This is ATP-dependent protease subunit HslV from Leptospira biflexa serovar Patoc (strain Patoc 1 / Ames).